The following is a 319-amino-acid chain: MDGVIKSIFTFILILEFIIGNLGNSFIVLVNCIDWVKRRKISLVDQLLIALAISRISLVWSIFGSWCVSVVFPALFATEKLLRMLTNIWTVTNHFSVWLATILGTFYFLKIANFSNSIFLYLKWRVKKVVLVLLLVTLVLLFLNILLINIHINASINGYRGNMTCSSASCNFIRFSSAIALTSTVFILIPFTLSLATFLLLSFSLWKHRKKMQHTVKGYRDVSTKAHRGVMQTVITFLLLYAVFFLTFFVSIWISERLKENQIIILSEMMGLAYPSGHSCVLILGNKKLRQASLSVLWWLRYRFKDGELSGHKEFRESS.

Residues 1 to 7 (MDGVIKS) lie on the Extracellular side of the membrane. Residues 8–28 (IFTFILILEFIIGNLGNSFIV) traverse the membrane as a helical segment. The Cytoplasmic portion of the chain corresponds to 29 to 55 (LVNCIDWVKRRKISLVDQLLIALAISR). Residues 56-76 (ISLVWSIFGSWCVSVVFPALF) traverse the membrane as a helical segment. At 77–87 (ATEKLLRMLTN) the chain is on the extracellular side. Residues T86 and W89 each coordinate cholesterol. The helical transmembrane segment at 88–108 (IWTVTNHFSVWLATILGTFYF) threads the bilayer. The Cytoplasmic portion of the chain corresponds to 109 to 129 (LKIANFSNSIFLYLKWRVKKV). The helical transmembrane segment at 130 to 150 (VLVLLLVTLVLLFLNILLINI) threads the bilayer. Over 151-184 (HINASINGYRGNMTCSSASCNFIRFSSAIALTST) the chain is Extracellular. 2 N-linked (GlcNAc...) asparagine glycosylation sites follow: N153 and N162. A180 lines the cholesterol pocket. The chain crosses the membrane as a helical span at residues 185–205 (VFILIPFTLSLATFLLLSFSL). Residues 206–232 (WKHRKKMQHTVKGYRDVSTKAHRGVMQ) lie on the Cytoplasmic side of the membrane. A helical transmembrane segment spans residues 233-253 (TVITFLLLYAVFFLTFFVSIW). Topologically, residues 254–261 (ISERLKEN) are extracellular. Residues 262–282 (QIIILSEMMGLAYPSGHSCVL) traverse the membrane as a helical segment. 2 residues coordinate cholesterol: I265 and E268. Over 283–317 (ILGNKKLRQASLSVLWWLRYRFKDGELSGHKEFRE) the chain is Cytoplasmic.

Belongs to the G-protein coupled receptor T2R family. In terms of assembly, core component of the TAS2R14-GNAI1 complex, consisting of TAS2R14, GNAI1, GNB1 and GNG2; within the complex interacts with GNAI1. Core component of the TAS2R14-GNAT3 complex, consisting of TAS2R14, GNAT3, GNB1 and GNG2; within the complex interacts with GNAT3. Core component of the TAS2R14-GNAS2 complex, consisting of TAS2R14, GNAS2, GNB1 and GNG2; within the complex interacts with GNAS2.

The protein localises to the membrane. It catalyses the reaction Ca(2+)(in) = Ca(2+)(out). The enzyme catalyses 3',5'-cyclic AMP(in) = 3',5'-cyclic AMP(out). Its activity is regulated as follows. Basal activity is enhanced by binding to bitter tastants, such as flufenamic acid and aristolochic acid. Regulated by cholesterol in a concentration-dependent manner. Functionally, gustducin-linked G-protein coupled receptor that plays a role in the perception of bitterness. The activity of this receptor stimulates GNAT3, activating the gustducin G-protein pathway. Likely plays a role in sensing the chemical composition of the gastrointestinal content and other extra-oral tissues via the inhibitory G-protein pathways. This is Taste receptor type 2 member 14 (TAS2R14) from Papio hamadryas (Hamadryas baboon).